The primary structure comprises 964 residues: Reticulon-3 (964 aa).

Residues Met-1 to Ala-24 show a composition bias toward low complexity. Disordered stretches follow at residues Met-1–Pro-32, Ala-68–Leu-109, and Trp-179–Ala-200. Ala-2 bears the N-acetylalanine mark. At Ala-2–Thr-795 the chain is on the cytoplasmic side. The residue at position 31 (Ser-31) is a Phosphoserine. The span at Ser-80–Ser-91 shows a compositional bias: low complexity. Residues Ser-217, Ser-225, Ser-230, Ser-233, Ser-270, Ser-303, and Ser-429 each carry the phosphoserine modification. Residues Ile-479 to Ser-536 form a disordered region. A compositionally biased stretch (basic and acidic residues) spans Thr-493–Met-511. Over residues Glu-516 to Gln-527 the composition is skewed to low complexity. A Phosphoserine modification is found at Ser-529. Thr-593 bears the Phosphothreonine mark. 3 positions are modified to phosphoserine: Ser-596, Ser-597, and Ser-673. Disordered stretches follow at residues Glu-645–Pro-674 and Val-697–Asp-723. The span at Phe-712–Asp-723 shows a compositional bias: polar residues. One can recognise a Reticulon domain in the interval Val-776–Glu-964. The helical intramembrane region spans Leu-796 to Leu-819. At Ser-820–Leu-876 the chain is on the cytoplasmic side. An intramembrane region (helical) is located at residues Ile-877–Met-899. At Thr-900 to Gly-903 the chain is on the cytoplasmic side. The helical intramembrane region spans Ala-904 to Tyr-926. Residues Val-919–Glu-964 form an interaction with FADD region. Over Glu-927–Glu-964 the chain is Cytoplasmic. The interaction with BACE1 stretch occupies residues Gln-932 to Asp-934.

Homodimer. Interacts with RTN4. Isoform 3 interacts with BACE1, BACE2, BCL2 and FADD. Interacts with ATL1 and ATL2. Isoform 3 interacts with TMEM33. Interacts with ZFYVE27 and with KIF5A in a ZFYVE27-dependent manner. Interacts with RIGI. Interacts with TRIM25. Isoform 1, isoform 3, isoform 4 and isoform 5 are expressed in spinal cord. Isoform 1 is present in brain, where it is expressed in the neurons of cerebral cortex, hippocampus, hypothalamus and cerebellum (at protein level).

The protein resides in the endoplasmic reticulum membrane. The protein localises to the golgi apparatus membrane. In terms of biological role, may be involved in membrane trafficking in the early secretory pathway. Inhibits BACE1 activity and amyloid precursor protein processing. May induce caspase-8 cascade and apoptosis. May favor BCL2 translocation to the mitochondria upon endoplasmic reticulum stress. Induces the formation of endoplasmic reticulum tubules. Also acts as an inflammation-resolving regulator by interacting with both TRIM25 and RIGI, subsequently impairing RIGI 'Lys-63'-linked polyubiquitination leading to IRF3 and NF-kappa-B inhibition. The polypeptide is Reticulon-3 (Rtn3) (Mus musculus (Mouse)).